A 153-amino-acid chain; its full sequence is ATP synthase subunit b' (153 aa).

The helical transmembrane segment at 20–40 (TLPLMAVQVVLLTFILNALFF) threads the bilayer.

It belongs to the ATPase B chain family. In terms of assembly, F-type ATPases have 2 components, F(1) - the catalytic core - and F(0) - the membrane proton channel. F(1) has five subunits: alpha(3), beta(3), gamma(1), delta(1), epsilon(1). F(0) has four main subunits: a(1), b(1), b'(1) and c(10-14). The alpha and beta chains form an alternating ring which encloses part of the gamma chain. F(1) is attached to F(0) by a central stalk formed by the gamma and epsilon chains, while a peripheral stalk is formed by the delta, b and b' chains.

It is found in the cellular thylakoid membrane. F(1)F(0) ATP synthase produces ATP from ADP in the presence of a proton or sodium gradient. F-type ATPases consist of two structural domains, F(1) containing the extramembraneous catalytic core and F(0) containing the membrane proton channel, linked together by a central stalk and a peripheral stalk. During catalysis, ATP synthesis in the catalytic domain of F(1) is coupled via a rotary mechanism of the central stalk subunits to proton translocation. Functionally, component of the F(0) channel, it forms part of the peripheral stalk, linking F(1) to F(0). The b'-subunit is a diverged and duplicated form of b found in plants and photosynthetic bacteria. The polypeptide is ATP synthase subunit b' (Prochlorococcus marinus (strain NATL2A)).